The following is a 1012-amino-acid chain: Probable inorganic carbon transporter subunit DabA (1012 aa).

Zn(2+) is bound by residues Cys489, Asp491, His679, and Cys694.

Belongs to the inorganic carbon transporter (TC 9.A.2) DabA family. As to quaternary structure, forms a complex with DabB. It depends on Zn(2+) as a cofactor.

The protein localises to the cell inner membrane. Part of an energy-coupled inorganic carbon pump. In Dechloromonas aromatica (strain RCB), this protein is Probable inorganic carbon transporter subunit DabA.